The sequence spans 320 residues: Phospho-N-acetylmuramoyl-pentapeptide-transferase (320 aa).

The next 10 helical transmembrane spans lie at phenylalanine 6 to glycine 26, methionine 54 to leucine 74, leucine 81 to isoleucine 101, leucine 117 to serine 137, isoleucine 145 to phenylalanine 165, isoleucine 175 to phenylalanine 195, isoleucine 200 to asparagine 220, isoleucine 226 to leucine 246, phenylalanine 251 to valine 271, and arginine 300 to phenylalanine 320.

It belongs to the glycosyltransferase 4 family. MraY subfamily. The cofactor is Mg(2+).

The protein resides in the cell membrane. The enzyme catalyses UDP-N-acetyl-alpha-D-muramoyl-L-alanyl-gamma-D-glutamyl-L-lysyl-D-alanyl-D-alanine + di-trans,octa-cis-undecaprenyl phosphate = Mur2Ac(oyl-L-Ala-gamma-D-Glu-L-Lys-D-Ala-D-Ala)-di-trans,octa-cis-undecaprenyl diphosphate + UMP. The protein operates within cell wall biogenesis; peptidoglycan biosynthesis. Functionally, catalyzes the initial step of the lipid cycle reactions in the biosynthesis of the cell wall peptidoglycan: transfers peptidoglycan precursor phospho-MurNAc-pentapeptide from UDP-MurNAc-pentapeptide onto the lipid carrier undecaprenyl phosphate, yielding undecaprenyl-pyrophosphoryl-MurNAc-pentapeptide, known as lipid I. The sequence is that of Phospho-N-acetylmuramoyl-pentapeptide-transferase from Latilactobacillus sakei subsp. sakei (strain 23K) (Lactobacillus sakei subsp. sakei).